Here is a 166-residue protein sequence, read N- to C-terminus: Large ribosomal subunit protein uL10 (166 aa).

Belongs to the universal ribosomal protein uL10 family. In terms of assembly, part of the ribosomal stalk of the 50S ribosomal subunit. The N-terminus interacts with L11 and the large rRNA to form the base of the stalk. The C-terminus forms an elongated spine to which L12 dimers bind in a sequential fashion forming a multimeric L10(L12)X complex.

In terms of biological role, forms part of the ribosomal stalk, playing a central role in the interaction of the ribosome with GTP-bound translation factors. This Shewanella baltica (strain OS223) protein is Large ribosomal subunit protein uL10.